The sequence spans 128 residues: Aspartate 1-decarboxylase (128 aa).

The Schiff-base intermediate with substrate; via pyruvic acid role is filled by Ser25. Ser25 carries the pyruvic acid (Ser) modification. Thr57 is a binding site for substrate. Catalysis depends on Tyr58, which acts as the Proton donor. 73–75 contacts substrate; it reads GAA.

This sequence belongs to the PanD family. Heterooctamer of four alpha and four beta subunits. The cofactor is pyruvate. Is synthesized initially as an inactive proenzyme, which is activated by self-cleavage at a specific serine bond to produce a beta-subunit with a hydroxyl group at its C-terminus and an alpha-subunit with a pyruvoyl group at its N-terminus.

It localises to the cytoplasm. The enzyme catalyses L-aspartate + H(+) = beta-alanine + CO2. The protein operates within cofactor biosynthesis; (R)-pantothenate biosynthesis; beta-alanine from L-aspartate: step 1/1. Functionally, catalyzes the pyruvoyl-dependent decarboxylation of aspartate to produce beta-alanine. In Staphylococcus epidermidis (strain ATCC 35984 / DSM 28319 / BCRC 17069 / CCUG 31568 / BM 3577 / RP62A), this protein is Aspartate 1-decarboxylase.